Consider the following 212-residue polypeptide: Thymidylate kinase (212 aa).

An ATP-binding site is contributed by 10–17; it reads GPDGAGKS.

Belongs to the thymidylate kinase family.

The catalysed reaction is dTMP + ATP = dTDP + ADP. Functionally, phosphorylation of dTMP to form dTDP in both de novo and salvage pathways of dTTP synthesis. The chain is Thymidylate kinase from Lactobacillus helveticus (strain DPC 4571).